A 192-amino-acid polypeptide reads, in one-letter code: Probable apo-citrate lyase phosphoribosyl-dephospho-CoA transferase (192 aa).

It belongs to the CitX family.

It catalyses the reaction apo-[citrate lyase ACP] + 2'-(5''-triphospho-alpha-D-ribosyl)-3'-dephospho-CoA = holo-[citrate lyase ACP] + diphosphate. In terms of biological role, transfers 2-(5''-triphosphoribosyl)-3'-dephosphocoenzyme-A on a serine residue to the apo-acyl carrier protein (gamma chain) of the citrate lyase to yield holo-acyl carrier protein. In Streptococcus pyogenes serotype M3 (strain ATCC BAA-595 / MGAS315), this protein is Probable apo-citrate lyase phosphoribosyl-dephospho-CoA transferase.